Reading from the N-terminus, the 350-residue chain is Ferredoxin--NADP reductase (350 aa).

FAD contacts are provided by threonine 22, glutamate 41, glutamine 49, tyrosine 54, valine 94, phenylalanine 129, aspartate 295, and serine 336.

Belongs to the ferredoxin--NADP reductase type 2 family. In terms of assembly, homodimer. The cofactor is FAD.

It catalyses the reaction 2 reduced [2Fe-2S]-[ferredoxin] + NADP(+) + H(+) = 2 oxidized [2Fe-2S]-[ferredoxin] + NADPH. The sequence is that of Ferredoxin--NADP reductase from Chlorobium luteolum (strain DSM 273 / BCRC 81028 / 2530) (Pelodictyon luteolum).